The chain runs to 140 residues: Ribonuclease P protein component (140 aa).

The disordered stretch occupies residues 115 to 140 (RCKPGAPKPPPFKKRPNKSVKSNKQT).

The protein belongs to the RnpA family. As to quaternary structure, consists of a catalytic RNA component (M1 or rnpB) and a protein subunit.

It carries out the reaction Endonucleolytic cleavage of RNA, removing 5'-extranucleotides from tRNA precursor.. Functionally, RNaseP catalyzes the removal of the 5'-leader sequence from pre-tRNA to produce the mature 5'-terminus. It can also cleave other RNA substrates such as 4.5S RNA. The protein component plays an auxiliary but essential role in vivo by binding to the 5'-leader sequence and broadening the substrate specificity of the ribozyme. The sequence is that of Ribonuclease P protein component from Pseudoalteromonas translucida (strain TAC 125).